Here is a 177-residue protein sequence, read N- to C-terminus: Large ribosomal subunit protein uL6 (177 aa).

Belongs to the universal ribosomal protein uL6 family. Part of the 50S ribosomal subunit.

In terms of biological role, this protein binds to the 23S rRNA, and is important in its secondary structure. It is located near the subunit interface in the base of the L7/L12 stalk, and near the tRNA binding site of the peptidyltransferase center. The polypeptide is Large ribosomal subunit protein uL6 (Allorhizobium ampelinum (strain ATCC BAA-846 / DSM 112012 / S4) (Agrobacterium vitis (strain S4))).